The primary structure comprises 151 residues: 3-hydroxyacyl-[acyl-carrier-protein] dehydratase FabZ (151 aa).

His-54 is a catalytic residue.

Belongs to the thioester dehydratase family. FabZ subfamily.

The protein resides in the cytoplasm. It carries out the reaction a (3R)-hydroxyacyl-[ACP] = a (2E)-enoyl-[ACP] + H2O. Its function is as follows. Involved in unsaturated fatty acids biosynthesis. Catalyzes the dehydration of short chain beta-hydroxyacyl-ACPs and long chain saturated and unsaturated beta-hydroxyacyl-ACPs. The sequence is that of 3-hydroxyacyl-[acyl-carrier-protein] dehydratase FabZ from Erwinia tasmaniensis (strain DSM 17950 / CFBP 7177 / CIP 109463 / NCPPB 4357 / Et1/99).